We begin with the raw amino-acid sequence, 102 residues long: Small ribosomal subunit protein uS10 (102 aa).

This sequence belongs to the universal ribosomal protein uS10 family. As to quaternary structure, part of the 30S ribosomal subunit.

In terms of biological role, involved in the binding of tRNA to the ribosomes. In Methanosphaera stadtmanae (strain ATCC 43021 / DSM 3091 / JCM 11832 / MCB-3), this protein is Small ribosomal subunit protein uS10.